The sequence spans 104 residues: Integration host factor subunit alpha (104 aa).

The protein belongs to the bacterial histone-like protein family. In terms of assembly, heterodimer of an alpha and a beta chain.

Its function is as follows. This protein is one of the two subunits of integration host factor, a specific DNA-binding protein that functions in genetic recombination as well as in transcriptional and translational control. This Buchnera aphidicola subsp. Cinara cedri (strain Cc) protein is Integration host factor subunit alpha.